Consider the following 58-residue polypeptide: Ribosome biogenesis protein Nop10 (58 aa).

It belongs to the NOP10 family.

Its function is as follows. Involved in ribosome biogenesis; more specifically in 18S rRNA pseudouridylation and in cleavage of pre-rRNA. The protein is Ribosome biogenesis protein Nop10 of Thermococcus onnurineus (strain NA1).